The sequence spans 386 residues: Patatin group M-1 (386 aa).

A signal peptide spans 1 to 23 (MATTKSFLILFFMILATTSSTCA). Positions 32–229 (LSIDGGGIKG…TVGDPALLSL (198 aa)) constitute a PNPLA domain. A GXGXXG motif is present at residues 36–41 (GGGIKG). Residues 75–79 (GTSTG) carry the GXSXG motif. Catalysis depends on S77, which acts as the Nucleophile. N115 carries N-linked (GlcNAc...) asparagine glycosylation. The Proton acceptor role is filled by D215. Residues 215 to 217 (DGG) carry the DGA/G motif.

The protein belongs to the patatin family. Tuber.

Its subcellular location is the vacuole. Probable lipolytic acyl hydrolase (LAH), an activity which is thought to be involved in the response of tubers to pathogens. This is Patatin group M-1 from Solanum tuberosum (Potato).